The following is a 581-amino-acid chain: Adenine deaminase (581 aa).

It belongs to the metallo-dependent hydrolases superfamily. Adenine deaminase family. Mn(2+) serves as cofactor.

It catalyses the reaction adenine + H2O + H(+) = hypoxanthine + NH4(+). In Brucella melitensis biotype 1 (strain ATCC 23456 / CCUG 17765 / NCTC 10094 / 16M), this protein is Adenine deaminase.